Consider the following 415-residue polypeptide: Multidrug resistance protein MdtA (415 aa).

The signal sequence occupies residues Met-1–Ala-21. Positions Ala-387–Ser-415 are disordered. Over residues Ala-394–Pro-403 the composition is skewed to basic and acidic residues.

This sequence belongs to the membrane fusion protein (MFP) (TC 8.A.1) family. Part of a tripartite efflux system composed of MdtA, MdtB and MdtC.

The protein localises to the cell inner membrane. This Cronobacter turicensis (strain DSM 18703 / CCUG 55852 / LMG 23827 / z3032) protein is Multidrug resistance protein MdtA.